Reading from the N-terminus, the 314-residue chain is Probable 2-(5''-triphosphoribosyl)-3'-dephosphocoenzyme-A synthase (314 aa).

It belongs to the CitG/MdcB family.

The enzyme catalyses 3'-dephospho-CoA + ATP = 2'-(5''-triphospho-alpha-D-ribosyl)-3'-dephospho-CoA + adenine. This Photobacterium profundum (strain SS9) protein is Probable 2-(5''-triphosphoribosyl)-3'-dephosphocoenzyme-A synthase.